The primary structure comprises 306 residues: uncharacterized protein (306 aa).

This is an uncharacterized protein from Escherichia coli (strain K12).